The chain runs to 299 residues: Protoheme IX farnesyltransferase (299 aa).

9 helical membrane-spanning segments follow: residues 27-47 (VVALMLLTSVVGMSLAPHEHF), 53-73 (LIALVGIALMAGSAAAFNHLI), 97-117 (FNVLLFALLIGSLGFLSLMLW), 121-141 (LTAYLTFASLLGYAAVYTLYL), 149-169 (IVIAGIAGAMPPLLGWTSITG), 175-195 (AWVLVMIIFIWTPPHFWALAI), 222-242 (ILLYAILLALVCMLPVLVGMA), 244-264 (YLYLFSALVLNVCFVRYAIKL), and 273-293 (AIEMFRFSIYFLLLLFCALLL).

It belongs to the UbiA prenyltransferase family. Protoheme IX farnesyltransferase subfamily.

Its subcellular location is the cell inner membrane. It catalyses the reaction heme b + (2E,6E)-farnesyl diphosphate + H2O = Fe(II)-heme o + diphosphate. It functions in the pathway porphyrin-containing compound metabolism; heme O biosynthesis; heme O from protoheme: step 1/1. Converts heme B (protoheme IX) to heme O by substitution of the vinyl group on carbon 2 of heme B porphyrin ring with a hydroxyethyl farnesyl side group. In Vibrio vulnificus (strain CMCP6), this protein is Protoheme IX farnesyltransferase.